Consider the following 1354-residue polypeptide: Ubiquitin carboxyl-terminal hydrolase 47 (1354 aa).

Residues 114–133 (EQPQLASDESGTADSSGLDD) show a composition bias toward polar residues. The tract at residues 114 to 139 (EQPQLASDESGTADSSGLDDSTQEKF) is disordered. Positions 174 to 549 (VGLVNQAMTC…NAYMLMYRLK (376 aa)) constitute a USP domain. Cysteine 183 (nucleophile) is an active-site residue. A disordered region spans residues 408-438 (DVEDEKSPQTDSCTDSGAENEGSCHSDQMSN). Polar residues predominate over residues 416-438 (QTDSCTDSGAENEGSCHSDQMSN). The Proton acceptor role is filled by histidine 488. Over residues 863-882 (LSLQQHQDGGNGDSSKSTEG) the composition is skewed to polar residues. Disordered stretches follow at residues 863-1004 (LSLQ…ESGK) and 1314-1335 (LAKKESSRLQKTGHRVTYSPRK). Positions 920–930 (PEERSDSDVNN) are enriched in basic and acidic residues. The segment covering 933 to 949 (STSSVDSDILSSSHSSD) has biased composition (low complexity). Basic and acidic residues predominate over residues 977–986 (KANDGKKETW). Residues 987–1000 (DTAEEDSGTDSEYD) show a composition bias toward acidic residues.

It belongs to the peptidase C19 family. USP47 subfamily.

It is found in the cytoplasm. It catalyses the reaction Thiol-dependent hydrolysis of ester, thioester, amide, peptide and isopeptide bonds formed by the C-terminal Gly of ubiquitin (a 76-residue protein attached to proteins as an intracellular targeting signal).. Functionally, ubiquitin-specific protease that specifically deubiquitinates monoubiquitinated DNA polymerase beta (polb), stabilizing polb thereby playing a role in base-excision repair (BER). The polypeptide is Ubiquitin carboxyl-terminal hydrolase 47 (usp47) (Xenopus tropicalis (Western clawed frog)).